The following is a 501-amino-acid chain: Cell division control protein 24 (501 aa).

Interacts with dna2, pcn1 and rfc1.

The protein resides in the nucleus. Its subcellular location is the cytoplasm. Has a role in the progression of DNA replication and in the maintenance of genomic integrity. Acts during S phase, after initiation, where it is essential for completion. This chain is Cell division control protein 24 (cdc24), found in Schizosaccharomyces pombe (strain 972 / ATCC 24843) (Fission yeast).